Here is a 186-residue protein sequence, read N- to C-terminus: Peptidyl-tRNA hydrolase (186 aa).

Tyr-14 serves as a coordination point for tRNA. Residue His-19 is the Proton acceptor of the active site. Residues Tyr-64, Asn-66, and Asn-112 each contribute to the tRNA site.

It belongs to the PTH family. Monomer.

The protein localises to the cytoplasm. It catalyses the reaction an N-acyl-L-alpha-aminoacyl-tRNA + H2O = an N-acyl-L-amino acid + a tRNA + H(+). Functionally, hydrolyzes ribosome-free peptidyl-tRNAs (with 1 or more amino acids incorporated), which drop off the ribosome during protein synthesis, or as a result of ribosome stalling. In terms of biological role, catalyzes the release of premature peptidyl moieties from peptidyl-tRNA molecules trapped in stalled 50S ribosomal subunits, and thus maintains levels of free tRNAs and 50S ribosomes. This Bacillus cereus (strain ATCC 10987 / NRS 248) protein is Peptidyl-tRNA hydrolase.